A 448-amino-acid chain; its full sequence is Phosphoglucosamine mutase (448 aa).

The Phosphoserine intermediate role is filled by S99. 4 residues coordinate Mg(2+): S99, D239, D241, and D243. Residue S99 is modified to Phosphoserine.

Belongs to the phosphohexose mutase family. Mg(2+) is required as a cofactor. Post-translationally, activated by phosphorylation.

It carries out the reaction alpha-D-glucosamine 1-phosphate = D-glucosamine 6-phosphate. Functionally, catalyzes the conversion of glucosamine-6-phosphate to glucosamine-1-phosphate. This is Phosphoglucosamine mutase from Lachnoclostridium phytofermentans (strain ATCC 700394 / DSM 18823 / ISDg) (Clostridium phytofermentans).